The following is a 224-amino-acid chain: Ribose-5-phosphate isomerase A (224 aa).

Residues 32 to 35 (TGST), 85 to 88 (DGAD), and 98 to 101 (KGGG) each bind substrate. E107 functions as the Proton acceptor in the catalytic mechanism. Residue K125 participates in substrate binding.

Belongs to the ribose 5-phosphate isomerase family. In terms of assembly, homodimer.

The enzyme catalyses aldehydo-D-ribose 5-phosphate = D-ribulose 5-phosphate. Its pathway is carbohydrate degradation; pentose phosphate pathway; D-ribose 5-phosphate from D-ribulose 5-phosphate (non-oxidative stage): step 1/1. Functionally, catalyzes the reversible conversion of ribose-5-phosphate to ribulose 5-phosphate. The chain is Ribose-5-phosphate isomerase A from Pseudomonas entomophila (strain L48).